A 216-amino-acid chain; its full sequence is Probable nicotinate-nucleotide adenylyltransferase (216 aa).

Belongs to the NadD family.

The enzyme catalyses nicotinate beta-D-ribonucleotide + ATP + H(+) = deamido-NAD(+) + diphosphate. It functions in the pathway cofactor biosynthesis; NAD(+) biosynthesis; deamido-NAD(+) from nicotinate D-ribonucleotide: step 1/1. Catalyzes the reversible adenylation of nicotinate mononucleotide (NaMN) to nicotinic acid adenine dinucleotide (NaAD). The chain is Probable nicotinate-nucleotide adenylyltransferase from Buchnera aphidicola subsp. Schizaphis graminum (strain Sg).